The sequence spans 417 residues: Serine hydroxymethyltransferase (417 aa).

(6S)-5,6,7,8-tetrahydrofolate contacts are provided by residues Leu-121 and 125–127 (GHL). Lys-229 bears the N6-(pyridoxal phosphate)lysine mark. Position 355–357 (355–357 (SPF)) interacts with (6S)-5,6,7,8-tetrahydrofolate.

The protein belongs to the SHMT family. As to quaternary structure, homodimer. Pyridoxal 5'-phosphate is required as a cofactor.

The protein localises to the cytoplasm. The catalysed reaction is (6R)-5,10-methylene-5,6,7,8-tetrahydrofolate + glycine + H2O = (6S)-5,6,7,8-tetrahydrofolate + L-serine. It functions in the pathway one-carbon metabolism; tetrahydrofolate interconversion. The protein operates within amino-acid biosynthesis; glycine biosynthesis; glycine from L-serine: step 1/1. Its function is as follows. Catalyzes the reversible interconversion of serine and glycine with tetrahydrofolate (THF) serving as the one-carbon carrier. This reaction serves as the major source of one-carbon groups required for the biosynthesis of purines, thymidylate, methionine, and other important biomolecules. Also exhibits THF-independent aldolase activity toward beta-hydroxyamino acids, producing glycine and aldehydes, via a retro-aldol mechanism. The sequence is that of Serine hydroxymethyltransferase from Proteus mirabilis (strain HI4320).